Here is a 501-residue protein sequence, read N- to C-terminus: Cytochrome P450 monooxygenase esdpH (501 aa).

Residues 5 to 22 (RVGILIIGVLATATFWLC) form a helical membrane-spanning segment. A heme-binding site is contributed by Cys-446.

Belongs to the cytochrome P450 family. It depends on heme as a cofactor.

The protein localises to the membrane. It functions in the pathway secondary metabolite biosynthesis; terpenoid biosynthesis. In terms of biological role, cytochrome P450 monooxygenase; part of the cluster that mediates the biosynthesis of shearones, diterpenoid pyrones (DPs) which are structurally diverse meroterpenoids consisting of a diterpene linked by a pyrone, and which may exhibit a range of bioactivities. Whitin the pathway, esdpH takes part in the molecular scaffold modification via the hydroxylation at C-6' and can transform shearone C into shearone E, shearone D into shearone F, and shearone H into shearone I, the latter being the final product of the pathway. The molecular scaffold is commonly biosynthesized by a series of enzymes including the non-reducing polyketide synthase (NR-PKS) esdpA that generates an alpha-pyrone; the prenyltransferase esdpC that attaches a geranylgeranyl pyrophosphate (GGPP) produced by the GGPP synthase (GGPPS) esdpD onto the pyrone unit; the FAD-dependent monooxygenase esdpE that converts an olefin on the diterpene unit into an epoxide; and the terpene cyclase esdpB that catalyzes the cyclization reactions to give the molecular backbone shearone A. In the modification steps, esdpF oxidizes the hydroxy group to a ketone at C-3 and esdpG then attaches hydroxy groups at both C-11 and C-12. After that, esdpI hydroxylates at C-20 and esdpH hydroxylates at C-6'. The ether bridge is generated by nucleophilic attack of the hydroxy group at C-20 to the carbonyl carbon at C-3. EsdpH can also functions prior to esdpI. The different combinations of these modification enzymes lead to the production of diverse shearone derivatives, shearone I being the end product of the pathway. The alpha-ketoglutarate-dependent dioxygenase esdpJ seems not to be involved in this pathway. In Penicillium shearii (Eupenicillium shearii), this protein is Cytochrome P450 monooxygenase esdpH.